We begin with the raw amino-acid sequence, 96 residues long: Small ribosomal subunit protein bS6 (96 aa).

This sequence belongs to the bacterial ribosomal protein bS6 family.

Functionally, binds together with bS18 to 16S ribosomal RNA. The chain is Small ribosomal subunit protein bS6 from Gloeobacter violaceus (strain ATCC 29082 / PCC 7421).